The primary structure comprises 120 residues: Large ribosomal subunit protein uL18 (120 aa).

Belongs to the universal ribosomal protein uL18 family. In terms of assembly, part of the 50S ribosomal subunit; part of the 5S rRNA/L5/L18/L25 subcomplex. Contacts the 5S and 23S rRNAs.

Its function is as follows. This is one of the proteins that bind and probably mediate the attachment of the 5S RNA into the large ribosomal subunit, where it forms part of the central protuberance. This is Large ribosomal subunit protein uL18 from Synechococcus elongatus (strain ATCC 33912 / PCC 7942 / FACHB-805) (Anacystis nidulans R2).